The following is a 262-amino-acid chain: Phosphatidylglycerol--prolipoprotein diacylglyceryl transferase (262 aa).

3 helical membrane-spanning segments follow: residues 17-37, 57-77, and 92-112; these read LKVH…WILA, LVFY…ALFY, and IWEG…AMYA. Arg-140 is a binding site for a 1,2-diacyl-sn-glycero-3-phospho-(1'-sn-glycerol). Transmembrane regions (helical) follow at residues 200 to 220 and 234 to 254; these read MAVS…VEFV and WLTM…VLLA.

This sequence belongs to the Lgt family.

The protein resides in the cell inner membrane. The enzyme catalyses L-cysteinyl-[prolipoprotein] + a 1,2-diacyl-sn-glycero-3-phospho-(1'-sn-glycerol) = an S-1,2-diacyl-sn-glyceryl-L-cysteinyl-[prolipoprotein] + sn-glycerol 1-phosphate + H(+). It functions in the pathway protein modification; lipoprotein biosynthesis (diacylglyceryl transfer). Catalyzes the transfer of the diacylglyceryl group from phosphatidylglycerol to the sulfhydryl group of the N-terminal cysteine of a prolipoprotein, the first step in the formation of mature lipoproteins. This chain is Phosphatidylglycerol--prolipoprotein diacylglyceryl transferase, found in Methylococcus capsulatus (strain ATCC 33009 / NCIMB 11132 / Bath).